The chain runs to 93 residues: UPF0367 protein ssl1972 (93 aa).

Belongs to the UPF0367 family.

The chain is UPF0367 protein ssl1972 from Synechocystis sp. (strain ATCC 27184 / PCC 6803 / Kazusa).